The following is a 376-amino-acid chain: Thymidine kinase (376 aa).

Residues 1–39 (MASYPCHQHASAFDQAARSRGHSNRRTALRPRRQQEATE) are disordered. The span at 19 to 32 (SRGHSNRRTALRPR) shows a compositional bias: basic residues. 56 to 63 (GPHGMGKT) provides a ligand contact to ATP. Glu-83 functions as the Proton acceptor in the catalytic mechanism. Tyr-101 and Gln-125 together coordinate substrate. Arg-216 contacts ATP. Arg-222 lines the substrate pocket. Residues 260 to 280 (GQLSGTAVPPQGAEPQSNAGP) are disordered.

This sequence belongs to the herpesviridae thymidine kinase family. Homodimer.

It carries out the reaction thymidine + ATP = dTMP + ADP + H(+). Its function is as follows. Catalyzes the transfer of the gamma-phospho group of ATP to thymidine to generate dTMP in the salvage pathway of pyrimidine synthesis. The dTMP serves as a substrate for DNA polymerase during viral DNA replication. Allows the virus to be reactivated and to grow in non-proliferative cells lacking a high concentration of phosphorylated nucleic acid precursors. The protein is Thymidine kinase of Homo sapiens (Human).